Consider the following 724-residue polypeptide: 1,3-beta-galactosyl-N-acetylhexosamine phosphorylase Cphy3030 (724 aa).

Asp-316 serves as the catalytic Proton donor.

Belongs to the glycoside hydrolase 112 family.

It catalyses the reaction beta-D-galactosyl-(1-&gt;3)-N-acetyl-D-glucosamine + phosphate = alpha-D-galactose 1-phosphate + N-acetyl-D-glucosamine. Its function is as follows. Reversibly phosphorolyzes beta-D-galactopyranosyl-(1-&gt;3)-N-acetyl-D-glucosamine to form alpha-D-galactopyranose 1-phosphate and acetyl-D-glucosamine. Active towards galacto-N-biose and lacto-N-biose. Does not phosphorolyze galacto-N-tetraose or lacto-N-tetraose. In the reverse reaction has activity toward N-acetyl-D-glucosamine and N-acetyl-D-galactosamine, but not L-rhamnose, D-glucose or D-galactose. This is 1,3-beta-galactosyl-N-acetylhexosamine phosphorylase Cphy3030 from Lachnoclostridium phytofermentans (strain ATCC 700394 / DSM 18823 / ISDg) (Clostridium phytofermentans).